The chain runs to 104 residues: Phosphoribosyl-ATP pyrophosphatase (104 aa).

The protein belongs to the PRA-PH family.

The protein resides in the cytoplasm. The catalysed reaction is 1-(5-phospho-beta-D-ribosyl)-ATP + H2O = 1-(5-phospho-beta-D-ribosyl)-5'-AMP + diphosphate + H(+). It participates in amino-acid biosynthesis; L-histidine biosynthesis; L-histidine from 5-phospho-alpha-D-ribose 1-diphosphate: step 2/9. This Streptococcus thermophilus (strain ATCC BAA-491 / LMD-9) protein is Phosphoribosyl-ATP pyrophosphatase.